Reading from the N-terminus, the 672-residue chain is MESIEEKLTQLRTTLRHHEFLYHVMDAPEVPDAEYDRLMRELRALEEAHPELVTPDSPTQRVGAAPLTEFSQVRHEVPMLSLDNVFDEASFLAFNKRVQDRLKSTDALVYCCELKLDGLAVSLLYENGLLVRAATRGDGTTGEDITLNVRTIRAIPLKLRGDNIPARLEVRGEVFLPQAGFEKINEEARRTGGKVFANPRNAAAGSLRQLDPRVTAKRPLTFFCYGVGLLEGGELPRSHMERLQQFKAWGLPVSDRIRLVKTPEEVLAFYHQVEADRPTLGFDIDGVVIKVDSLELQEQLGFVARAPRWAVAFKFPAQEQMTTVRDVEFQVGRTGAITPVARLEPVQVAGVLVSNATLHNADEIARLGLRIGDKVVIRRAGDVIPQVVNVVLSERPEETRPVVFPAQCPVCGSDVERVEGEAVTRCTGGLICGAQRKEALKHFVSRRAMDVDGMGDKIIDQLVEKEYVHTPADLFRLTAGKLTGLDRMGPKSAQNLVNALEKAKETTFARFLYALGIREVGEATAAGLAAHFGTLEALINASIDDLQKVPDVGIVVATHVFNFFEEESNRAVIRDLTEEVGIHWPAPQVVKAEEIDSPFAGKTVVLTGTLSQMSRDDAKARLAALGAKVSGSVSKKTDLLIAGEAAGSKLAKAQELGIEVIDEAEMLRLLGE.

NAD(+) contacts are provided by residues 32-36 (DAEYD), 81-82 (SL), and glutamate 113. Lysine 115 (N6-AMP-lysine intermediate) is an active-site residue. Arginine 136, glutamate 173, lysine 290, and lysine 314 together coordinate NAD(+). 4 residues coordinate Zn(2+): cysteine 408, cysteine 411, cysteine 426, and cysteine 432. Residues 594-672 (EIDSPFAGKT…EAEMLRLLGE (79 aa)) enclose the BRCT domain.

This sequence belongs to the NAD-dependent DNA ligase family. LigA subfamily. The cofactor is Mg(2+). Requires Mn(2+) as cofactor.

The catalysed reaction is NAD(+) + (deoxyribonucleotide)n-3'-hydroxyl + 5'-phospho-(deoxyribonucleotide)m = (deoxyribonucleotide)n+m + AMP + beta-nicotinamide D-nucleotide.. DNA ligase that catalyzes the formation of phosphodiester linkages between 5'-phosphoryl and 3'-hydroxyl groups in double-stranded DNA using NAD as a coenzyme and as the energy source for the reaction. It is essential for DNA replication and repair of damaged DNA. This Cronobacter sakazakii (strain ATCC BAA-894) (Enterobacter sakazakii) protein is DNA ligase.